The sequence spans 118 residues: uncharacterized protein (118 aa).

An N-terminal signal peptide occupies residues 1-26; sequence MTKLKMLSMLTVMIASLFIFSSQALA. In terms of domain architecture, SH3b spans 30-104; the sequence is FTVSTSSGAP…VNIGYVSDTY (75 aa).

It to B.subtilis YraI.

This is an uncharacterized protein from Bacillus subtilis (strain 168).